The primary structure comprises 209 residues: ATP-dependent dethiobiotin synthetase BioD (209 aa).

Position 13-18 (13-18) interacts with ATP; sequence DIGKTV. Threonine 17 contributes to the Mg(2+) binding site. The active site involves lysine 33. The Mg(2+) site is built by arginine 47 and glutamate 100. ATP-binding positions include 100 to 103 and 184 to 186; these read EGAG and PRL.

The protein belongs to the dethiobiotin synthetase family. Homodimer. Mg(2+) serves as cofactor.

It is found in the cytoplasm. The catalysed reaction is (7R,8S)-7,8-diammoniononanoate + CO2 + ATP = (4R,5S)-dethiobiotin + ADP + phosphate + 3 H(+). It participates in cofactor biosynthesis; biotin biosynthesis; biotin from 7,8-diaminononanoate: step 1/2. Functionally, catalyzes a mechanistically unusual reaction, the ATP-dependent insertion of CO2 between the N7 and N8 nitrogen atoms of 7,8-diaminopelargonic acid (DAPA, also called 7,8-diammoniononanoate) to form a ureido ring. This chain is ATP-dependent dethiobiotin synthetase BioD, found in Rhodopseudomonas palustris (strain BisB18).